The primary structure comprises 168 residues: Pleiotrophin (168 aa).

Residues 1–32 (MQTPQYLQQRRKFAAAFLAFIFILAAVDTAEA) form the signal peptide. Disulfide bonds link C47-C76, C55-C85, C62-C89, C99-C131, and C109-C141. Chondroitin sulfate binding regions lie at residues 92-99 (KKQFGAEC) and 123-131 (KRALHNADC). Residues 141–168 (CGKLTKSKPQAESKKKKKEGKKQEKMLD) form a disordered region. Residues 147–168 (SKPQAESKKKKKEGKKQEKMLD) are chondroitin sulfate A binding.

As to quaternary structure, interacts with ALK and NEK6. Interacts with PTPRZ1 (via chondroitin sulfate groups); promotes formation of homooligomers; oligomerization impairs tyrosine phosphatase activity. Forms a complex with PTPRZ1 and CTNNB1; this complex inactivates PTPRZ1 protein tyrosine phosphatase activity through PTN interaction and stimulates tyrosine phosphorylation of CTNNB1. Interacts with ITGB3 and ITGA5. Forms a complex with PTPRZ1 and integrin alpha-V/beta-3 (ITGAV:ITGB3) that stimulates endothelial cell migration through ITGB3 'Tyr-773' phosphorylation. Interacts with SDC3 (via heparan sulfate chains); this interaction mediates the neurite outgrowth-promoting signal from PTN to the cytoskeleton of growing neurites; this interaction mediates osteoblast recruitment. Interacts with GPC2 (via heparan sulfate); this interaction promotes neurite outgrowth through binding of PTN with chondroitin sulfate of proteoglycans, thereby releasing PTPRS of chondroitin sulfate proteoglycans (CSPGs) and leading to binding with heparan sulfate of GPC2. Post-translationally, phosphorylated by NEK6.

The protein resides in the secreted. In terms of biological role, secreted growth factor that mediates its signal through cell-surface proteoglycan and non-proteoglycan receptors. Binds cell-surface proteoglycan receptor via their chondroitin sulfate (CS) groups. Thereby regulates many processes like cell proliferation, cell survival, cell growth, cell differentiation and cell migration in several tissues namely neuron and bone. Also plays a role in synaptic plasticity and learning-related behavior by inhibiting long-term synaptic potentiation. Binds PTPRZ1, leading to neutralization of the negative charges of the CS chains of PTPRZ1, inducing PTPRZ1 clustering, thereby causing the dimerization and inactivation of its phosphatase activity leading to increased tyrosine phosphorylation of each of the PTPRZ1 substrates like ALK, CTNNB1 or AFAP1L2 in order to activate the PI3K-AKT pathway. Through PTPRZ1 binding controls oligodendrocyte precursor cell differentiation by enhancing the phosphorylation of AFAP1L2 in order to activate the PI3K-AKT pathway. Forms a complex with PTPRZ1 and integrin alpha-V/beta-3 (ITGAV:ITGB3) that stimulates endothelial cell migration through SRC dephosphorylation and activation that consequently leads to ITGB3 'Tyr-773' phosphorylation. In adult hippocampus promotes dendritic arborization, spine development, and functional integration and connectivity of newborn granule neurons through ALK by activating AKT signaling pathway. Binds GPC2 and chondroitin sulfate proteoglycans (CSPGs) at the neuron surface, leading to abrogation of binding between PTPRS and CSPGs and neurite outgrowth promotion. Binds SDC3 and mediates bone formation by recruiting and attaching osteoblasts/osteoblast precursors to the sites for new bone deposition. Binds ALK and promotes cell survival and cell proliferation through MAPK pathway activation. Inhibits proliferation and enhances differentiation of neural stem cells by inhibiting FGF2-induced fibroblast growth factor receptor signaling pathway. Mediates regulatory mechanisms in normal hemostasis and in hematopoietic regeneration and in maintaining the balance of myeloid and lymphoid regeneration. In addition may play a role in the female reproductive system, auditory response and the progesterone-induced decidualization pathway. The polypeptide is Pleiotrophin (Bos taurus (Bovine)).